The chain runs to 161 residues: Allophycocyanin alpha chain (161 aa).

N71 carries the N4-methylasparagine modification. C81 contributes to the (2R,3E)-phycocyanobilin binding site.

Belongs to the phycobiliprotein family. In terms of assembly, heterodimer of an alpha and a beta chain. Contains one covalently linked phycocyanobilin chromophore.

It is found in the plastid. The protein resides in the chloroplast thylakoid membrane. Light-harvesting photosynthetic bile pigment-protein from the phycobiliprotein complex. Allophycocyanin has a maximum absorption at approximately 650 nanometers. The chain is Allophycocyanin alpha chain (apcA) from Galdieria sulphuraria (Red alga).